The chain runs to 316 residues: NAD kinase 1 (316 aa).

Catalysis depends on D67, which acts as the Proton acceptor. Position 67 to 68 (67 to 68 (DG)) interacts with NAD(+). The segment at 132–151 (RSAEERADAPTPLQQPDVED) is disordered. NAD(+)-binding positions include 160-161 (ND), R190, and D192.

This sequence belongs to the NAD kinase family. A divalent metal cation is required as a cofactor.

Its subcellular location is the cytoplasm. It catalyses the reaction NAD(+) + ATP = ADP + NADP(+) + H(+). In terms of biological role, involved in the regulation of the intracellular balance of NAD and NADP, and is a key enzyme in the biosynthesis of NADP. Catalyzes specifically the phosphorylation on 2'-hydroxyl of the adenosine moiety of NAD to yield NADP. The chain is NAD kinase 1 from Parasynechococcus marenigrum (strain WH8102).